The sequence spans 188 residues: ATP synthase subunit b (188 aa).

The helical transmembrane segment at 24-44 threads the bilayer; the sequence is LPASYDIVWSLVVFIIVLILF.

Belongs to the ATPase B chain family. F-type ATPases have 2 components, F(1) - the catalytic core - and F(0) - the membrane proton channel. F(1) has five subunits: alpha(3), beta(3), gamma(1), delta(1), epsilon(1). F(0) has three main subunits: a(1), b(2) and c(10-14). The alpha and beta chains form an alternating ring which encloses part of the gamma chain. F(1) is attached to F(0) by a central stalk formed by the gamma and epsilon chains, while a peripheral stalk is formed by the delta and b chains.

It localises to the cell membrane. F(1)F(0) ATP synthase produces ATP from ADP in the presence of a proton or sodium gradient. F-type ATPases consist of two structural domains, F(1) containing the extramembraneous catalytic core and F(0) containing the membrane proton channel, linked together by a central stalk and a peripheral stalk. During catalysis, ATP synthesis in the catalytic domain of F(1) is coupled via a rotary mechanism of the central stalk subunits to proton translocation. Functionally, component of the F(0) channel, it forms part of the peripheral stalk, linking F(1) to F(0). The protein is ATP synthase subunit b of Corynebacterium diphtheriae (strain ATCC 700971 / NCTC 13129 / Biotype gravis).